Reading from the N-terminus, the 384-residue chain is Actin-related protein 2/3 complex subunit 1 (384 aa).

WD repeat units lie at residues 61–99 (DHDK…TYKP), 105–146 (RINR…WVSK), 151–190 (PIKS…LDSK), 212–251 (YQGS…QSVN), and 349–383 (AHEN…VIYT).

Belongs to the WD repeat ARPC1 family. In terms of assembly, component of the Arp2/3 complex composed of ARP2, ARP3, ARC40/p41-ARC, ARC35/p34-ARC, ARC18/p21-ARC, ARC19/p20-ARC and ARC16/p16-ARC.

Its subcellular location is the cytoplasm. The protein resides in the cytoskeleton. It is found in the actin patch. Functions as a component of the Arp2/3 complex which is involved in regulation of actin polymerization and together with an activating nucleation-promoting factor (NPF) mediates the formation of branched actin networks. This Saccharomyces cerevisiae (strain ATCC 204508 / S288c) (Baker's yeast) protein is Actin-related protein 2/3 complex subunit 1 (ARC40).